The sequence spans 196 residues: MVKSMYAYVREAWARPDKSDVKALLWDRMQVWRREGSVTRIDRPTRIDRARALGYKAKQGIAVVRVHVRRGGRRASRYVRARRSARMGKNSSTPGKSIQRIAEERASVRYPNMEVLNSYWVGQDGKLKYYEVILVDGHHPSIQSDKNLAWLANPTHRGRAERGKTSAGRKGRGMRTRGRGTEKTRPSIRSHANQGK.

The tract at residues 156 to 196 (HRGRAERGKTSAGRKGRGMRTRGRGTEKTRPSIRSHANQGK) is disordered. Residues 167–178 (AGRKGRGMRTRG) are compositionally biased toward basic residues.

Belongs to the eukaryotic ribosomal protein eL15 family.

This is Large ribosomal subunit protein eL15 from Methanoregula boonei (strain DSM 21154 / JCM 14090 / 6A8).